The chain runs to 551 residues: ETS domain-containing transcription factor ERF (551 aa).

Phosphothreonine occurs at positions 3 and 7. S20 and S24 each carry phosphoserine. A DNA-binding region (ETS) is located at residues 27 to 107 (IQLWHFILEL…KGKRFTYKFN (81 aa)). 2 disordered regions span residues 130 to 169 (QSAP…SSSS) and 184 to 304 (GSVS…SHFS). A phosphoserine mark is found at S185 and S190. Over residues 239–250 (RGGPEPLSPFPV) the composition is skewed to pro residues. Low complexity predominate over residues 251–268 (SPLAGPGSLLPPQLSPAL). A compositionally biased stretch (gly residues) spans 289 to 301 (SGGGGPSGSGGGS). The residue at position 327 (S327) is a Phosphoserine. The interval 342–476 (PQRPDKCPLP…KPEPGEAPGV (135 aa)) is disordered. Residues 348-361 (CPLPPMAPETPPVP) show a composition bias toward pro residues. Residues 362-373 (SSASSSSSSSSS) are compositionally biased toward low complexity. Gly residues predominate over residues 404–413 (GGSGSGGLAE). 2 positions are modified to phosphoserine: S433 and S437. Acidic residues predominate over residues 433 to 453 (SEGESEEVEVTDISDEDEEDG). Position 443 is a phosphothreonine (T443). Residue S446 is modified to Phosphoserine. Glycyl lysine isopeptide (Lys-Gly) (interchain with G-Cter in SUMO2) cross-links involve residues K467, K483, and K514. Residues 495 to 551 (RLEGGGCLSGGPEDEGEDKKVRGDVGPGESGGPLTPRRVSSDLQHATAQLSLEHRDS) are disordered. T529 is modified (phosphothreonine; by MAPK1). Residues S534, S535, and S551 each carry the phosphoserine modification. Over residues 535 to 544 (SDLQHATAQL) the composition is skewed to polar residues.

This sequence belongs to the ETS family. Post-translationally, phosphorylated by multiple kinases including MAPK1/ERK2 at THR-529. Phosphorylation regulates the activity of ERF. As to expression, expressed along the osteogenic margins of the developing calvarial bones, in a similar distribution to that observed for the master osteogenic regulator RUNX2.

Its subcellular location is the nucleus. Potent transcriptional repressor that binds to the H1 element of the Ets2 promoter. May regulate other genes involved in cellular proliferation. Required for extraembryonic ectoderm differentiation, ectoplacental cone cavity closure, and chorioallantoic attachment. May be important for regulating trophoblast stem cell differentiation. The protein is ETS domain-containing transcription factor ERF (Erf) of Mus musculus (Mouse).